The chain runs to 1031 residues: MTREYAELHCLSNFSFQRGASSARELFERALRHGYKALAITDECTLAGIVRAWQASKSTGLPLIVGSEMHIENGPKVVLLVENQAGYEALCKLITVARRRAGKGEYRVLREDFEPAPDGLLALWLPDLDGNAQACLAGGRWLRERFAERLWLGVGLHRGPDDEQRLADLLALAQSLGVPAVASGDVHMHARGRRALQDTMTAIRHHTTVAEAGHLLFANGERHLRPLDALSEHYPDWLLAESVRIARRCTFDLGDLKYEYPHELVPKGQTSTSWLRELTERGVRRRWPGGLTPATRAQVEKELALIAEKKFDSYFLTVHDIVEFARSQHILCQGRGSAANSAVCYALGITELNPEQSNLLFERFISRERNEPPDIDVDFEHDRREEVIQYIFRRYGRGRAALTAVASTYHGSGAMRDVAKVLGLPPEQINALAEAFSRWSDSLPSPERLREYGFDADTPILKRVLALTGELIGFPRHLSQHPGGFVISEHPLETLVPVENAAMADRTIIQWDKDDLDLVGLLKVDILALGMLSALRRTFDLVHLHRGQRWTLATLPGDDRKTYEMISRADTIGVFQIESRAQMAMLPRLRPEKFYDLVIEVAIVRPGPIQGDMVHPYLRRRNGEEDVTYPPKLESVFKRTLGVPLFQEQVMEVAILAADYTPGEADELRRAMAAWKRHGGLEPHRERLRTGMLKNGYEADFADRIFEQIKGFGSYGFPESHAASFALLTYASCWLKCHEPAAFTCALINSWPMGFYSPDQLLQDARRHHIEIRPVDVRYSDWDCSLEPLDHPDRTRNLAIRLGLRMVRSFREEDALRIEVARAKRPFVDATDLTLRAELDARAAEALADSGALRGLIGHRHRARWEVAGVEAQRPLFDDLPSEETQVTLPLPTVAEDLVADYTTLGTTLGPHPLALLRRQLAAKRFRSSQDLLHLENDRTLSVAGLVIGRQRPGTASGVTFVTLEDEFGMVNVVVWRDLAERQRKVLVGSQLLQVFGRLESKSGVRHLIAQRLYDLTPLLTGLDVRSRDFQ.

It belongs to the DNA polymerase type-C family. DnaE2 subfamily.

It is found in the cytoplasm. It catalyses the reaction DNA(n) + a 2'-deoxyribonucleoside 5'-triphosphate = DNA(n+1) + diphosphate. Functionally, DNA polymerase involved in damage-induced mutagenesis and translesion synthesis (TLS). It is not the major replicative DNA polymerase. The polypeptide is Error-prone DNA polymerase (Pseudomonas syringae pv. syringae (strain B728a)).